The sequence spans 436 residues: UDP-N-acetylmuramate--L-alanine ligase (436 aa).

108–114 (GAHGKTS) contributes to the ATP binding site.

Belongs to the MurCDEF family.

The protein localises to the cytoplasm. The catalysed reaction is UDP-N-acetyl-alpha-D-muramate + L-alanine + ATP = UDP-N-acetyl-alpha-D-muramoyl-L-alanine + ADP + phosphate + H(+). It participates in cell wall biogenesis; peptidoglycan biosynthesis. Functionally, cell wall formation. This chain is UDP-N-acetylmuramate--L-alanine ligase, found in Bacillus cytotoxicus (strain DSM 22905 / CIP 110041 / 391-98 / NVH 391-98).